The chain runs to 562 residues: Glutamine--tRNA ligase (562 aa).

The 'HIGH' region motif lies at 35–45; sequence PEPNGYLHIGH. Residues 36 to 38 and 42 to 48 contribute to the ATP site; these read EPN and HIGHAKS. L-glutamine contacts are provided by Asp-68 and Tyr-213. ATP is bound by residues Thr-232, 262–263, and 270–272; these read RL and LSK. The 'KMSKS' region motif lies at 269 to 273; it reads ILSKR.

This sequence belongs to the class-I aminoacyl-tRNA synthetase family. In terms of assembly, monomer.

It is found in the cytoplasm. It catalyses the reaction tRNA(Gln) + L-glutamine + ATP = L-glutaminyl-tRNA(Gln) + AMP + diphosphate. This Buchnera aphidicola subsp. Schizaphis graminum (strain Sg) protein is Glutamine--tRNA ligase.